The sequence spans 951 residues: MEKTYNPQDIEQPLYEHWEKQGYFKPNGDESQESFCIMIPPPNVTGSLHMGHAFQQTIMDTMIRYQRMQGKNTLWQVGTDHAGIATQMVVERKIAAEEGKTRHDYGREAFIDKIWEWKAESGGTITRQMRRLGNSVDWERERFTMDEGLSNAVKEVFVRLYKEDLIYRGKRLVNWDPKLRTAISDLEVENRESKGSMWHIRYPLADGAKTADGKDYLVVATTRPETLLGDTGVAVNPEDPRYKDLIGKYVILPLVNRRIPIVGDEHADMEKGTGCVKITPAHDFNDYEVGKRHALPMINILTFDGDIRESAQVFDTKGNESDIYSSEIPAEFQKLERFAARKAVVAAVDALGLLEEIKPHDLTVPYGDRGGVVIEPMLTDQWYVRADVLAKPAVEAVENGDIQFVPKQYENMYFSWMRDIQDWCISRQLWWGHRIPAWYDEAGNVYVGRNEDEVRKENNLGADVALRQDEDVLDTWFSSALWTFSTLGWPENTDALRQFHPTSVMVSGFDIIFFWIARMIMMTMHFIKDENGKPQVPFHTVYMTGLIRDDEGQKMSKSKGNVIDPLDMVDGISLPELLEKRTGNMMQPQLADKIRKRTEKQFPNGIEPHGTDALRFTLAALASTGRDINWDMKRLEGYRNFCNKLWNASRFVLMNTEGQDCGFNGGEMTLSLADRWILAEFNQTIKAYREALDSFRFDIAAGILYEFTWNQFCDWYLELTKPVMNGGTEAELRGTRHTLVTVLEGLLRLAHPIIPFITETIWQRVKVLCGITADTIMLQPFPQYDASQVDEAALADTEWLKQAIVAVRNIRAEMNIAPGKPLELLLRGCSADAERRVNENRGFLQTLARLESITVLPADDKGPVSVTKIVDGAELLIPMAGLINKEDELARLAKEVAKIEGEISRIENKLANEGFVARAPEAVIAKEREKLEGYAEAKAKLIEQQAVIAAL.

Residues 42–52 (PNVTGSLHMGH) carry the 'HIGH' region motif. The 'KMSKS' region signature appears at 554 to 558 (KMSKS). Lysine 557 is a binding site for ATP. A coiled-coil region spans residues 880–944 (AGLINKEDEL…AEAKAKLIEQ (65 aa)).

This sequence belongs to the class-I aminoacyl-tRNA synthetase family. ValS type 1 subfamily. As to quaternary structure, monomer.

It localises to the cytoplasm. It carries out the reaction tRNA(Val) + L-valine + ATP = L-valyl-tRNA(Val) + AMP + diphosphate. Functionally, catalyzes the attachment of valine to tRNA(Val). As ValRS can inadvertently accommodate and process structurally similar amino acids such as threonine, to avoid such errors, it has a 'posttransfer' editing activity that hydrolyzes mischarged Thr-tRNA(Val) in a tRNA-dependent manner. The sequence is that of Valine--tRNA ligase from Escherichia coli O6:H1 (strain CFT073 / ATCC 700928 / UPEC).